The following is a 168-amino-acid chain: Small ribosomal subunit protein uS9 (168 aa).

Residues 1–29 (MAQNEELTAEAVEAEETLTSYTSESTSAE) show a composition bias toward low complexity. The tract at residues 1 to 36 (MAQNEELTAEAVEAEETLTSYTSESTSAEDAPKKER) is disordered.

Belongs to the universal ribosomal protein uS9 family.

The protein is Small ribosomal subunit protein uS9 of Paenarthrobacter aurescens (strain TC1).